Reading from the N-terminus, the 184-residue chain is Large ribosomal subunit protein uL6 (184 aa).

The protein belongs to the universal ribosomal protein uL6 family. As to quaternary structure, part of the 50S ribosomal subunit.

In terms of biological role, this protein binds to the 23S rRNA, and is important in its secondary structure. It is located near the subunit interface in the base of the L7/L12 stalk, and near the tRNA binding site of the peptidyltransferase center. This is Large ribosomal subunit protein uL6 from Methanosphaera stadtmanae (strain ATCC 43021 / DSM 3091 / JCM 11832 / MCB-3).